A 47-amino-acid polypeptide reads, in one-letter code: Bifunctional chitinase/lysozyme (47 aa).

In terms of domain architecture, GH18 spans 1–47 (GGIAIYWGQNGNEGTLTQTCNTGKYSYVNIAFLNKFGNGQTPEINLA).

It belongs to the glycosyl hydrolase 18 family. Chitinase class II subfamily.

It is found in the secreted. Its subcellular location is the extracellular space. The catalysed reaction is Random endo-hydrolysis of N-acetyl-beta-D-glucosaminide (1-&gt;4)-beta-linkages in chitin and chitodextrins.. The enzyme catalyses Hydrolysis of (1-&gt;4)-beta-linkages between N-acetylmuramic acid and N-acetyl-D-glucosamine residues in a peptidoglycan and between N-acetyl-D-glucosamine residues in chitodextrins.. In terms of biological role, bifunctional enzyme with lysozyme/chitinase activity. The protein is Bifunctional chitinase/lysozyme of Parthenocissus quinquefolia (Virginia creeper).